A 349-amino-acid polypeptide reads, in one-letter code: N-formyl peptide receptor 3 (349 aa).

The Extracellular segment spans residues 1 to 27; it reads METNFSIPLNESEEVLPEPAGHTVLWI. N-linked (GlcNAc...) asparagine glycosylation is found at N4 and N10. The chain crosses the membrane as a helical span at residues 28-50; it reads FSLLVHGVTFIFGVLGNGLVIWV. Topologically, residues 51–61 are cytoplasmic; that stretch reads AGFRMTRTVNT. A helical transmembrane segment spans residues 62 to 83; that stretch reads ICYLNLALADFSFSAILPFRMV. Residues 84-100 lie on the Extracellular side of the membrane; the sequence is SVAMREKWPFGTFLCKL. Residues C98 and C176 are joined by a disulfide bond. Residues 101–121 form a helical membrane-spanning segment; sequence VHVMIDINLFVSVYLITIIAL. The Cytoplasmic portion of the chain corresponds to 122–140; it reads DRCICVLHPAWAQNHRTMS. A helical transmembrane segment spans residues 141-162; it reads LAKRVMMGLWILAIVLTLPNFI. The Extracellular segment spans residues 163 to 205; it reads FWTTISTKNGDTYCIFNFPFWGDTAVERLNAFITMGKVFLILH. Residues 206–226 form a helical membrane-spanning segment; that stretch reads FIIGFSMPMSIITVCYGIIAA. The Cytoplasmic portion of the chain corresponds to 227 to 242; sequence KIHRNHMIKSSSPLRV. A helical transmembrane segment spans residues 243–266; that stretch reads FAAVVASFFICWFPYELIGILMAV. Residues 267-286 are Extracellular-facing; sequence WLKEMLLNGKYKIILVLLNP. A helical membrane pass occupies residues 287 to 306; that stretch reads TSSLAFFNSCLNPILYVFLG. Residues 307 to 349 are Cytoplasmic-facing; sequence SNFQERLIRSLPTSLERALTEVPDSAQTSNTHTNSASPPEETE. The interval 328–349 is disordered; the sequence is VPDSAQTSNTHTNSASPPEETE. Residues 331–343 show a composition bias toward polar residues; sequence SAQTSNTHTNSAS.

Belongs to the G-protein coupled receptor 1 family.

It localises to the cell membrane. Its function is as follows. Low affinity receptor for N-formyl-methionyl peptides, which are powerful neutrophils chemotactic factors. Binding of FMLP to the receptor causes activation of neutrophils. This response is mediated via a G-protein that activates a phosphatidylinositol-calcium second messenger system. In Pongo pygmaeus (Bornean orangutan), this protein is N-formyl peptide receptor 3 (FPR3).